The chain runs to 707 residues: Serine/threonine protein kinase UL97 (707 aa).

The span at 1–14 shows a compositional bias: low complexity; the sequence is MSSALRSRARSASL. Disordered regions lie at residues 1-32, 115-146, 176-199, and 231-264; these read MSSA…PSRA, EKED…GDGY, FTGG…PLRP, and ESQD…EADS. The span at 115–127 shows a compositional bias: basic and acidic residues; sequence EKEDAASDKENLR. Over residues 178 to 188 the composition is skewed to low complexity; it reads GGSDPSDSVSG. ATP is bound by residues 337-345 and Lys359; that span reads LGQGSFGEV. Asp456 serves as the catalytic Proton acceptor.

It belongs to the protein kinase superfamily. Tyr protein kinase family. HCMV ganciclovir subfamily. As to quaternary structure, interacts with UL83. In terms of processing, autophosphorylates on serine and threonine residues.

Its subcellular location is the virion. The catalysed reaction is L-seryl-[protein] + ATP = O-phospho-L-seryl-[protein] + ADP + H(+). It catalyses the reaction L-threonyl-[protein] + ATP = O-phospho-L-threonyl-[protein] + ADP + H(+). In terms of biological role, serine/threonine protein kinase that plays important roles in several processes including nuclear viral egress, viral replication or regulation of host cell cycle progression. Participates in the acquisition of tegument during virion morphogenesis in the nucleus. Redistributes the host nuclear lamina by phosphorylating cellular Lamins-A/C. Plays a role in viral DNA synthesis by phosphorylating the DNA polymerase processivity factor UL44. Stimulates host cell cycle to support viral DNA synthesis by phosphorylating host retinoblastoma/RB1 protein. Additional substrates have been identified including host EF1D or H2B. Also phosphorylates host SAMHD1 and thereby counteracts its antiviral effect by reducing its dNTP hydrolase activity. The protein is Serine/threonine protein kinase UL97 (UL97) of Human cytomegalovirus (strain Towne) (HHV-5).